The sequence spans 1529 residues: MRNSGTPVNIIVGSHVWIEDSDVAWIDGLVEKINGQDVEVQATNGKKITAKLSKIYPKDMEAPAGGVDDMTKLSYLHEPGVLQNLKIRYELNEIYTYTGNILIAINPFQRLPHIYDAHMMQQYKGAPFGELSPHVFAVADVAYRAMINEGKSNSILVSGESGAGKTETTKMLMRYLAYLGGRAVTEGRTVEQQVLESNPVLEAFGNAKTVRNNNSSRFGKFVEIQFDKQGRISGAAVRTYLLERSRVCQISDPERNYHCFYLLCAAPQEELEKYKLGHPKTFHYLNQSKCFELVGISDAHDYIATRRAMDIVGMSEKEQEAIFRVVAAILHLGNVEFTKGKEVDSSVPKDDKSKFHLNTVAELLMCDVKALEDALCKRVMVTPEEVIKRSLDPQSALISRDGLAKTIYSRLFDWLVEKINVSIGQDATSRSLIGVLDIYGFESFKTNSFEQFCINFTNEKLQQHFNQHVFKMEQEEYTKEAIDWSYIEFVDNQDVLDLIEKKPGGIVALLDEACMFPKSTHETFANKLYQTFKTHKRFIKPKLSRTDFAVAHYAGEVQYQSDLFLDKNKDYVIPEHQDLLGASKCPFVVGLFPPLPEETSKSSKFSSIGSRFKLQLQQLMETLNSTEPHYIRCVKPNNLLKPAVFENVNIMQQLRCGGVLEAIRISCAGYPTRKPFFEFINRFGLLYPRALEGNYEEKAAAQKILDNIGLKGYQVGKTKVFLRAGQMAELDARRTMVLSAAAKKIQRRIRTHQAQRRFILLRKATISLQALCRGRLSSKIFDNLRRQAAAVKIQKNARRLHSRKSYKNLHVAALVVQTGLRAMAAHKQFRFRKQTKAATTIQAQFRCHRATLYFKKLKKGVILSQTRWRGKLARRELRQLKMASRETGALKEAKDMLEKKVEELTYRAQLEKRSRVDLEEEKNQEIKKLQSSLEEMRKKVDETNGLLVKEREAAKKAIEEAPPVVTETQVLVEDTQKIEALTEEVEGLKANLEQEKQRADDATRKFDEAQESSEDRKKKLEDTEKKAQQLQESVTRLEEKCNNLESENKVLRQQAVSIAPNKFLSGRSRSILQRGSESGHLSVDARPSLDLHSHSINRRDLSEVDDKPQKSLNEKQQENQELLIRCIVQHLGFQGKRPVTACIIYKCLLQWRSFEVERTSVFDRIIQTIGQAIETQDNNNILAYWLSNASTLLLLLQRTLKASGAAGMAPQRRRSSSATLFGRMTQSFRGTPQGVNLAMINGGVDTLRQVEAKYPALLFKQQLTAYVEKIYGMIRDNLKKEISPLLGLCIQAPRTSRASLVKGASRSVGNTAAQQALIAHWQGIVKSLTNFLNNLKSNHVPPFLVRKVFTQIFSFINVQLFNSLLLRRECCSFSNGEYVKAGLAELEHWCYNATDEYAGSSWDELKHIRQAIGFLVIHQKPKKTLDEISHELCPVLSIQQLYRISTMYWDDKYGTHSVSPDVIANMRVLMTEDSNNAVSNSFLLDDDSSIPFSVDDLSKSMERIEIGDVEPPPLIRENSGFSFLLPCSD.

The 50-residue stretch at 11–60 (IVGSHVWIEDSDVAWIDGLVEKINGQDVEVQATNGKKITAKLSKIYPKDM) folds into the Myosin N-terminal SH3-like domain. Positions 65 to 735 (GGVDDMTKLS…QMAELDARRT (671 aa)) constitute a Myosin motor domain. Residues 159-166 (GESGAGKT) and 212-220 (NNNSSRFGK) each bind ATP. Actin-binding stretches follow at residues 498-532 (LIEK…YQTF), 534-557 (THKR…AGEV), 592-616 (FPPL…KLQL), and 616-638 (LQQL…KPNN). 6 consecutive IQ domains span residues 738–767 (LSAA…ATIS), 761–790 (LRKA…QAAA), 786–815 (RQAA…AALV), 809–838 (LHVA…TKAA), 834–863 (QTKA…GVIL), and 857–886 (LKKG…ASRE). Residues 887-1059 (TGALKEAKDM…VLRQQAVSIA (173 aa)) are a coiled coil. Basic and acidic residues predominate over residues 993–1027 (EQEKQRADDATRKFDEAQESSEDRKKKLEDTEKKA). Disordered stretches follow at residues 993-1031 (EQEK…QQLQ) and 1096-1115 (INRR…LNEK). Residues 1163–1472 (DRIIQTIGQA…IANMRVLMTE (310 aa)) enclose the Dilute domain.

It belongs to the TRAFAC class myosin-kinesin ATPase superfamily. Myosin family. Plant myosin class XI subfamily. In terms of assembly, homodimer.

Its subcellular location is the cytoplasm. Functionally, myosin heavy chain that is required for the cell cycle-regulated transport of various organelles and proteins for their segregation. Functions by binding with its tail domain to receptor proteins on organelles and exerting force with its N-terminal motor domain against actin filaments, thereby transporting its cargo along polarized actin cables. Involved in trafficking of Golgi stacks, mitochondria and peroxisomes. The sequence is that of Myosin-11 (XI-E) from Arabidopsis thaliana (Mouse-ear cress).